The sequence spans 266 residues: HLA class II histocompatibility antigen, DR beta 4 chain (266 aa).

The signal sequence occupies residues 1–29; the sequence is MVCLKLPGGSCMAALTVTLTVLSSPLALA. The beta-1 stretch occupies residues 30-124; sequence GDTQPRFLEQ…VESFTVQRRV (95 aa). Topologically, residues 30-227 are extracellular; sequence GDTQPRFLEQ…SARSESAQSK (198 aa). 2 disulfides stabilise this stretch: Cys-44/Cys-108 and Cys-146/Cys-202. N-linked (GlcNAc...) asparagine glycosylation is present at Asn-48. The tract at residues 125–227 is beta-2; sequence QPKVTVYPSK…SARSESAQSK (103 aa). The region spanning 126 to 216 is the Ig-like C1-type domain; sequence PKVTVYPSKT…PSMMSPLTVQ (91 aa). Residues 228–250 traverse the membrane as a helical segment; the sequence is MLSGVGGFVLGLLFLGTGLFIYF. The Cytoplasmic segment spans residues 251-266; that stretch reads RNQKGHSGLQPTGLLS. Lys-254 is covalently cross-linked (Glycyl lysine isopeptide (Lys-Gly) (interchain with G-Cter in ubiquitin)).

This sequence belongs to the MHC class II family. In terms of assembly, heterodimer of an alpha and a beta subunit; also referred as MHC class II molecule. In the endoplasmic reticulum (ER) it forms a heterononamer; 3 MHC class II molecules bind to a CD74 homotrimer (also known as invariant chain or HLA class II histocompatibility antigen gamma chain). In the endosomal/lysosomal system; CD74 undergoes sequential degradation by various proteases; leaving a small fragment termed CLIP on each MHC class II molecule. MHC class II molecule interacts with HLA_DM, and HLA_DO in B-cells, in order to release CLIP and facilitate the binding of antigenic peptides. Ubiquitinated by MARCH1 and MARCH8 at Lys-254 leading to sorting into the endosome system and down-regulation of MHC class II. When associated with ubiquitination of the alpha subunit of HLA-DR: HLA-DRA 'Lys-244', the down-regulation of MHC class II may be highly effective.

It localises to the cell membrane. The protein resides in the endoplasmic reticulum membrane. The protein localises to the golgi apparatus. Its subcellular location is the trans-Golgi network membrane. It is found in the endosome membrane. It localises to the lysosome membrane. The protein resides in the late endosome membrane. Functionally, binds peptides derived from antigens that access the endocytic route of antigen presenting cells (APC) and presents them on the cell surface for recognition by the CD4 T-cells. The peptide binding cleft accommodates peptides of 10-30 residues. The peptides presented by MHC class II molecules are generated mostly by degradation of proteins that access the endocytic route, where they are processed by lysosomal proteases and other hydrolases. Exogenous antigens that have been endocytosed by the APC are thus readily available for presentation via MHC II molecules, and for this reason this antigen presentation pathway is usually referred to as exogenous. As membrane proteins on their way to degradation in lysosomes as part of their normal turn-over are also contained in the endosomal/lysosomal compartments, exogenous antigens must compete with those derived from endogenous components. Autophagy is also a source of endogenous peptides, autophagosomes constitutively fuse with MHC class II loading compartments. In addition to APCs, other cells of the gastrointestinal tract, such as epithelial cells, express MHC class II molecules and CD74 and act as APCs, which is an unusual trait of the GI tract. To produce a MHC class II molecule that presents an antigen, three MHC class II molecules (heterodimers of an alpha and a beta chain) associate with a CD74 trimer in the ER to form a heterononamer. Soon after the entry of this complex into the endosomal/lysosomal system where antigen processing occurs, CD74 undergoes a sequential degradation by various proteases, including CTSS and CTSL, leaving a small fragment termed CLIP (class-II-associated invariant chain peptide). The removal of CLIP is facilitated by HLA-DM via direct binding to the alpha-beta-CLIP complex so that CLIP is released. HLA-DM stabilizes MHC class II molecules until primary high affinity antigenic peptides are bound. The MHC II molecule bound to a peptide is then transported to the cell membrane surface. In B-cells, the interaction between HLA-DM and MHC class II molecules is regulated by HLA-DO. Primary dendritic cells (DCs) also to express HLA-DO. Lysosomal microenvironment has been implicated in the regulation of antigen loading into MHC II molecules, increased acidification produces increased proteolysis and efficient peptide loading. The sequence is that of HLA class II histocompatibility antigen, DR beta 4 chain (HLA-DRB4) from Homo sapiens (Human).